The chain runs to 715 residues: Fatty acid oxidation complex subunit alpha (715 aa).

Positions 1–190 are enoyl-CoA hydratase/isomerase; the sequence is MIYEGKAITV…KVSAVDAVVT (190 aa). Residue Asp297 coordinates substrate. The tract at residues 312 to 715 is 3-hydroxyacyl-CoA dehydrogenase; it reads KDVKQAAVLG…MAKNGQSFFG (404 aa). Residues Met325, Asp344, 401 to 403, Lys408, and Ser430 contribute to the NAD(+) site; that span reads VVE. The active-site For 3-hydroxyacyl-CoA dehydrogenase activity is the His451. Position 454 (Asn454) interacts with NAD(+). Residues Asn501 and Tyr660 each coordinate substrate.

The protein in the N-terminal section; belongs to the enoyl-CoA hydratase/isomerase family. In the C-terminal section; belongs to the 3-hydroxyacyl-CoA dehydrogenase family. Heterotetramer of two alpha chains (FadB) and two beta chains (FadA).

The catalysed reaction is a (3S)-3-hydroxyacyl-CoA + NAD(+) = a 3-oxoacyl-CoA + NADH + H(+). It carries out the reaction a (3S)-3-hydroxyacyl-CoA = a (2E)-enoyl-CoA + H2O. It catalyses the reaction a 4-saturated-(3S)-3-hydroxyacyl-CoA = a (3E)-enoyl-CoA + H2O. The enzyme catalyses (3S)-3-hydroxybutanoyl-CoA = (3R)-3-hydroxybutanoyl-CoA. The catalysed reaction is a (3Z)-enoyl-CoA = a 4-saturated (2E)-enoyl-CoA. It carries out the reaction a (3E)-enoyl-CoA = a 4-saturated (2E)-enoyl-CoA. It participates in lipid metabolism; fatty acid beta-oxidation. Functionally, involved in the aerobic and anaerobic degradation of long-chain fatty acids via beta-oxidation cycle. Catalyzes the formation of 3-oxoacyl-CoA from enoyl-CoA via L-3-hydroxyacyl-CoA. It can also use D-3-hydroxyacyl-CoA and cis-3-enoyl-CoA as substrate. This is Fatty acid oxidation complex subunit alpha from Pseudomonas fragi.